The chain runs to 369 residues: Mitogen-activated protein kinase 5 (369 aa).

Residues 36-322 enclose the Protein kinase domain; sequence QPPIMPIGRG…VEEALDHPYL (287 aa). ATP contacts are provided by residues 42 to 50 and lysine 65; that span reads IGRGAYGIV. The Proton acceptor role is filled by aspartate 162. Threonine 194 carries the phosphothreonine modification. The short motif at 194-196 is the TXY element; it reads TEY. Position 196 is a phosphotyrosine (tyrosine 196).

This sequence belongs to the protein kinase superfamily. CMGC Ser/Thr protein kinase family. MAP kinase subfamily. In terms of assembly, interacts with MKK1. Post-translationally, dually phosphorylated on Thr-194 and Tyr-196, which activates the enzyme.

It carries out the reaction L-seryl-[protein] + ATP = O-phospho-L-seryl-[protein] + ADP + H(+). It catalyses the reaction L-threonyl-[protein] + ATP = O-phospho-L-threonyl-[protein] + ADP + H(+). Its activity is regulated as follows. Activated by threonine and tyrosine phosphorylation. Functionally, involved in disease resistance and abiotic stress tolerance signaling pathways. This is Mitogen-activated protein kinase 5 (MPK5) from Oryza sativa subsp. indica (Rice).